The following is a 207-amino-acid chain: Ribonuclease HII (207 aa).

An RNase H type-2 domain is found at Gly18–Pro207. Residues Asp24, Glu25, and Asp116 each coordinate a divalent metal cation.

It belongs to the RNase HII family. Mn(2+) is required as a cofactor. The cofactor is Mg(2+).

The protein resides in the cytoplasm. The enzyme catalyses Endonucleolytic cleavage to 5'-phosphomonoester.. Its function is as follows. Endonuclease that specifically degrades the RNA of RNA-DNA hybrids. The chain is Ribonuclease HII from Albidiferax ferrireducens (strain ATCC BAA-621 / DSM 15236 / T118) (Rhodoferax ferrireducens).